Consider the following 64-residue polypeptide: Large ribosomal subunit protein bL35 (64 aa).

Residues 1–15 are compositionally biased toward basic residues; the sequence is MPKQKSHSGASKRFR. The disordered stretch occupies residues 1–22; sequence MPKQKSHSGASKRFRVTGSGKV.

The protein belongs to the bacterial ribosomal protein bL35 family.

The polypeptide is Large ribosomal subunit protein bL35 (Frankia casuarinae (strain DSM 45818 / CECT 9043 / HFP020203 / CcI3)).